The sequence spans 707 residues: Toxin RTX-I translocation ATP-binding protein (707 aa).

One can recognise a Peptidase C39 domain in the interval 1-125; the sequence is MDFYREEDYG…SLYQGKLILV (125 aa). His83 is an active-site residue. The ABC transmembrane type-1 domain maps to 154–436; sequence FIETLIVSIF…LAQLWQDFQQ (283 aa). Transmembrane regions (helical) follow at residues 158–178, 188–208, 295–315, 387–407, and 410–430; these read LIVS…FQVV, FSTL…EIVL, LVIL…SPIL, VVMV…DLSI, and LIAF…LAQL. In terms of domain architecture, ABC transporter spans 468-703; sequence ITFRNIRFRY…PNGLYHYLHQ (236 aa). Position 502–509 (502–509) interacts with ATP; the sequence is GRSGSGKS.

Belongs to the ABC transporter superfamily. Protein-1 exporter (TC 3.A.1.109) family. In terms of assembly, homodimer.

It is found in the cell membrane. Its function is as follows. Involved in the transport of the toxin RTX-I as well as that of RTX-II. This Actinobacillus pleuropneumoniae (Haemophilus pleuropneumoniae) protein is Toxin RTX-I translocation ATP-binding protein (apxIB).